A 227-amino-acid chain; its full sequence is MKVSYHGHSVVKIETNGKVILIDPFLTGNPKTDLKAEDVKVDAILLSHGHGDHVGDTVELAKKNNAVVVAPFELATFLSWQGVNTHPMHIGGSHEFDFGKVKFTQAFHGSSYIDEENKTITYTGMPAGILVTAEEKTLYHAGDTALFSDMKLIGELNNIDVAFLPIGDNFTMGPEDAVLAAKWVQAKTVVPMHYNTFPVIEQDPYQFVEKLQNCTGKVLEAGESITL.

The protein belongs to the UPF0173 family.

The sequence is that of UPF0173 metal-dependent hydrolase BT9727_4343 from Bacillus thuringiensis subsp. konkukian (strain 97-27).